A 90-amino-acid chain; its full sequence is uncharacterized protein (90 aa).

This is an uncharacterized protein from Mycoplasma genitalium (strain ATCC 33530 / DSM 19775 / NCTC 10195 / G37) (Mycoplasmoides genitalium).